We begin with the raw amino-acid sequence, 429 residues long: Glutamate-1-semialdehyde 2,1-aminomutase (429 aa).

At lysine 265 the chain carries N6-(pyridoxal phosphate)lysine.

This sequence belongs to the class-III pyridoxal-phosphate-dependent aminotransferase family. HemL subfamily. In terms of assembly, homodimer. Pyridoxal 5'-phosphate is required as a cofactor.

The protein localises to the cytoplasm. It carries out the reaction (S)-4-amino-5-oxopentanoate = 5-aminolevulinate. The protein operates within porphyrin-containing compound metabolism; protoporphyrin-IX biosynthesis; 5-aminolevulinate from L-glutamyl-tRNA(Glu): step 2/2. This is Glutamate-1-semialdehyde 2,1-aminomutase from Shewanella piezotolerans (strain WP3 / JCM 13877).